The chain runs to 417 residues: Serine--tRNA ligase (417 aa).

226–228 (TSE) is an L-serine binding site. Residues 257-259 (RRE) and V273 each bind ATP. Position 280 (E280) interacts with L-serine. 344-347 (ELTS) provides a ligand contact to ATP. Residue T379 participates in L-serine binding.

It belongs to the class-II aminoacyl-tRNA synthetase family. Type-1 seryl-tRNA synthetase subfamily. As to quaternary structure, homodimer. The tRNA molecule binds across the dimer.

It localises to the cytoplasm. It carries out the reaction tRNA(Ser) + L-serine + ATP = L-seryl-tRNA(Ser) + AMP + diphosphate + H(+). It catalyses the reaction tRNA(Sec) + L-serine + ATP = L-seryl-tRNA(Sec) + AMP + diphosphate + H(+). It functions in the pathway aminoacyl-tRNA biosynthesis; selenocysteinyl-tRNA(Sec) biosynthesis; L-seryl-tRNA(Sec) from L-serine and tRNA(Sec): step 1/1. Catalyzes the attachment of serine to tRNA(Ser). Is also able to aminoacylate tRNA(Sec) with serine, to form the misacylated tRNA L-seryl-tRNA(Sec), which will be further converted into selenocysteinyl-tRNA(Sec). The polypeptide is Serine--tRNA ligase (Mycolicibacterium smegmatis (strain ATCC 700084 / mc(2)155) (Mycobacterium smegmatis)).